The chain runs to 218 residues: Glutathione S-transferase Mu 5 (218 aa).

Residues 2–88 enclose the GST N-terminal domain; sequence PMTLGYWDIR…YIARKHNLCG (87 aa). Glutathione is bound by residues 7-8, 46-50, 59-60, and 72-73; these read YW, WLNEK, NL, and QS. The region spanning 90 to 207 is the GST C-terminal domain; the sequence is TEEEKIRVDI…MKSSQFLRGL (118 aa). A substrate-binding site is contributed by tyrosine 116.

It belongs to the GST superfamily. Mu family. Homodimer.

Its subcellular location is the cytoplasm. It carries out the reaction RX + glutathione = an S-substituted glutathione + a halide anion + H(+). Functionally, conjugation of reduced glutathione to a wide number of exogenous and endogenous hydrophobic electrophiles. The sequence is that of Glutathione S-transferase Mu 5 (GSTM5) from Homo sapiens (Human).